We begin with the raw amino-acid sequence, 204 residues long: Signal peptidase I (204 aa).

The Cytoplasmic segment spans residues 1–10 (MNSFKNFLKE). Residues 11-30 (WGLFLLILSLLALSRIFFWS) form a helical membrane-spanning segment. The Extracellular segment spans residues 31 to 204 (NVRVEGHSMD…LWPITRIGTF (174 aa)). Catalysis depends on residues S38 and K76.

It belongs to the peptidase S26 family.

The protein resides in the cell membrane. It catalyses the reaction Cleavage of hydrophobic, N-terminal signal or leader sequences from secreted and periplasmic proteins.. This is Signal peptidase I (lepB) from Streptococcus pneumoniae serotype 4 (strain ATCC BAA-334 / TIGR4).